A 570-amino-acid chain; its full sequence is Molecular chaperone MKKS (570 aa).

192–199 is a binding site for ATP; sequence GHIILGKS. Positions 198-370 are substrate-binding apical domain; it reads KSLIVPLKGQ…FHLIPNEATI (173 aa).

This sequence belongs to the TCP-1 chaperonin family. As to quaternary structure, component of a complex composed at least of MKKS, BBS10, BBS12, TCP1, CCT2, CCT3, CCT4, CCT5 and CCT8. Interacts with STUB1. Interacts with BBS2 (via coiled coil domain). Interacts with CCDC28B. Interacts with BBS12. Interacts with SMARCC1, a component of the SWI/SNF complexes; the interaction takes place predominantly in the cytoplasm and may modulate SMARCC1 location. Interacts with DLEC1. As to expression, widely expressed in adult and fetal tissues.

It localises to the cytoplasm. Its subcellular location is the cytoskeleton. The protein localises to the microtubule organizing center. The protein resides in the centrosome. It is found in the cytosol. It localises to the nucleus. Probable molecular chaperone that assists the folding of proteins upon ATP hydrolysis. Plays a role in the assembly of BBSome, a complex involved in ciliogenesis regulating transports vesicles to the cilia. May play a role in protein processing in limb, cardiac and reproductive system development. May play a role in cytokinesis. The protein is Molecular chaperone MKKS of Homo sapiens (Human).